Reading from the N-terminus, the 394-residue chain is MTQLETRTEPMVVNFGPHHPSMHGVLRLVVTLDGEDVVDCEPVIGYLHRGMEKIAENRTNVMFVPYVSRMDYAAGMFYEAVVVNAPEKMADIPVPKRASYIRVLMLELNRIANHLLWLGPFLADVGAQTPFFYIFREREMIYDLWEAATGQRLINNNYFRIGGVAADLPWGWLEKCRDFCDWFGPKIDEYEKLITNNPIFRRRIEGLGTIEKQDAINWSLSGPMLRASGVPWDLRKVDHYECYDDFDWQVASEKEGDCYARYRVRIEEMRQSLKILRQACDMIPGGPTENLEAKRLNEGKGSDAAGFDFQYVAKKVAPTFKIPNGELYTRLESGKGEIGVFIQGNNDVTPWRFKIRAADSNNLQILPHILKGHKVADIMAILGSIDVIMGSVDR.

The protein belongs to the complex I 49 kDa subunit family. In terms of assembly, NDH-1 can be composed of about 15 different subunits; different subcomplexes with different compositions have been identified which probably have different functions.

The protein localises to the cellular thylakoid membrane. It carries out the reaction a plastoquinone + NADH + (n+1) H(+)(in) = a plastoquinol + NAD(+) + n H(+)(out). The enzyme catalyses a plastoquinone + NADPH + (n+1) H(+)(in) = a plastoquinol + NADP(+) + n H(+)(out). Its function is as follows. NDH-1 shuttles electrons from an unknown electron donor, via FMN and iron-sulfur (Fe-S) centers, to quinones in the respiratory and/or the photosynthetic chain. The immediate electron acceptor for the enzyme in this species is believed to be plastoquinone. Couples the redox reaction to proton translocation, and thus conserves the redox energy in a proton gradient. Cyanobacterial NDH-1 also plays a role in inorganic carbon-concentration. This Parasynechococcus marenigrum (strain WH8102) protein is NAD(P)H-quinone oxidoreductase subunit H.